Reading from the N-terminus, the 291-residue chain is Tyrosine-protein kinase PtkA (291 aa).

The tract at residues Met-1–Pro-79 is disordered. Residues His-23–Asn-60 are compositionally biased toward polar residues. Residue Tyr-262 is modified to Phosphotyrosine.

The protein belongs to the HAD-like hydrolase superfamily. CbbY/CbbZ/Gph/YieH family. Interacts with PtpA. In terms of processing, autophosphorylated.

It catalyses the reaction L-tyrosyl-[protein] + ATP = O-phospho-L-tyrosyl-[protein] + ADP + H(+). Functionally, required for growth within macrophages. Catalyzes the phosphorylation of PtpA on the tyrosine residues at positions 128 and 129, thereby increasing PtpA phosphatase activity and promoting pathogenicity. This Mycobacterium bovis (strain ATCC BAA-935 / AF2122/97) protein is Tyrosine-protein kinase PtkA.